Reading from the N-terminus, the 73-residue chain is uncharacterized protein (73 aa).

Residues 54–72 (VSFIVAPTVMQVQCLFFFI) traverse the membrane as a helical segment.

The protein resides in the membrane. This is an uncharacterized protein from Saccharomyces cerevisiae (strain ATCC 204508 / S288c) (Baker's yeast).